Here is a 123-residue protein sequence, read N- to C-terminus: Large ribosomal subunit protein eL8 (123 aa).

The protein belongs to the eukaryotic ribosomal protein eL8 family. In terms of assembly, part of the 50S ribosomal subunit. Probably part of the RNase P complex.

It localises to the cytoplasm. Its function is as follows. Multifunctional RNA-binding protein that recognizes the K-turn motif in ribosomal RNA, the RNA component of RNase P, box H/ACA, box C/D and box C'/D' sRNAs. The protein is Large ribosomal subunit protein eL8 of Methanothermobacter thermautotrophicus (strain ATCC 29096 / DSM 1053 / JCM 10044 / NBRC 100330 / Delta H) (Methanobacterium thermoautotrophicum).